A 304-amino-acid polypeptide reads, in one-letter code: Small ribosomal subunit protein uS3 (304 aa).

The KH type-2 domain maps to 17-86 (IDEFFAEELG…DPQVDVQEVD (70 aa)). The interval 216–304 (LLEGEPEDSE…DEMDEEGDDE (89 aa)) is disordered.

It belongs to the universal ribosomal protein uS3 family. Part of the 30S ribosomal subunit.

Its function is as follows. Binds the lower part of the 30S subunit head. The sequence is that of Small ribosomal subunit protein uS3 from Haloarcula marismortui (strain ATCC 43049 / DSM 3752 / JCM 8966 / VKM B-1809) (Halobacterium marismortui).